Reading from the N-terminus, the 207-residue chain is Small ribosomal subunit protein uS10m (207 aa).

Residues 1–14 (MNMFRQAVRSFVRY) constitute a mitochondrion transit peptide.

Belongs to the universal ribosomal protein uS10 family. As to quaternary structure, part of the mitochondrial small ribosomal subunit.

The protein resides in the mitochondrion. Functionally, involved in mitochondrial genome encoded proteins translation. Involved in the binding of tRNA to the ribosomes. This is Small ribosomal subunit protein uS10m (RSM10) from Kluyveromyces lactis (strain ATCC 8585 / CBS 2359 / DSM 70799 / NBRC 1267 / NRRL Y-1140 / WM37) (Yeast).